The primary structure comprises 96 residues: Large ribosomal subunit protein bL27 (96 aa).

The propeptide occupies 1 to 10 (MLLKLNIQLF).

Belongs to the bacterial ribosomal protein bL27 family. The N-terminus is cleaved by ribosomal processing cysteine protease Prp.

This is Large ribosomal subunit protein bL27 from Phytoplasma mali (strain AT).